The sequence spans 143 residues: Translation initiation factor 2 subunit beta (143 aa).

It belongs to the eIF-2-beta/eIF-5 family. In terms of assembly, heterotrimer composed of an alpha, a beta and a gamma chain.

In terms of biological role, eIF-2 functions in the early steps of protein synthesis by forming a ternary complex with GTP and initiator tRNA. The chain is Translation initiation factor 2 subunit beta (eif2b) from Methanocaldococcus jannaschii (strain ATCC 43067 / DSM 2661 / JAL-1 / JCM 10045 / NBRC 100440) (Methanococcus jannaschii).